The chain runs to 252 residues: 3-deoxy-manno-octulosonate cytidylyltransferase (252 aa).

It belongs to the KdsB family.

It is found in the cytoplasm. It carries out the reaction 3-deoxy-alpha-D-manno-oct-2-ulosonate + CTP = CMP-3-deoxy-beta-D-manno-octulosonate + diphosphate. It functions in the pathway nucleotide-sugar biosynthesis; CMP-3-deoxy-D-manno-octulosonate biosynthesis; CMP-3-deoxy-D-manno-octulosonate from 3-deoxy-D-manno-octulosonate and CTP: step 1/1. The protein operates within bacterial outer membrane biogenesis; lipopolysaccharide biosynthesis. Activates KDO (a required 8-carbon sugar) for incorporation into bacterial lipopolysaccharide in Gram-negative bacteria. In Rhodospirillum rubrum (strain ATCC 11170 / ATH 1.1.1 / DSM 467 / LMG 4362 / NCIMB 8255 / S1), this protein is 3-deoxy-manno-octulosonate cytidylyltransferase.